Reading from the N-terminus, the 224-residue chain is Holliday junction branch migration complex subunit RuvA (224 aa).

The interval 1–64 (MIGKVAGILD…EDLLQLFGFP (64 aa)) is domain I. The tract at residues 65 to 143 (TMIEKEWHRL…ALMAMGGGTA (79 aa)) is domain II. Residues 141–185 (GTAALAPSEPPEPEPGTSSGSRRKTRAPEPPRPSHTADALSALAN) form a disordered region. Residues 144-170 (ALAPSEPPEPEPGTSSGSRRKTRAPEP) form a flexible linker region. A domain III region spans residues 171–224 (PRPSHTADALSALANLGYQPTDAAQAVAQAAGESPDADTAALIRAALKLLAPKS).

Belongs to the RuvA family. As to quaternary structure, homotetramer. Forms an RuvA(8)-RuvB(12)-Holliday junction (HJ) complex. HJ DNA is sandwiched between 2 RuvA tetramers; dsDNA enters through RuvA and exits via RuvB. An RuvB hexamer assembles on each DNA strand where it exits the tetramer. Each RuvB hexamer is contacted by two RuvA subunits (via domain III) on 2 adjacent RuvB subunits; this complex drives branch migration. In the full resolvosome a probable DNA-RuvA(4)-RuvB(12)-RuvC(2) complex forms which resolves the HJ.

It is found in the cytoplasm. The RuvA-RuvB-RuvC complex processes Holliday junction (HJ) DNA during genetic recombination and DNA repair, while the RuvA-RuvB complex plays an important role in the rescue of blocked DNA replication forks via replication fork reversal (RFR). RuvA specifically binds to HJ cruciform DNA, conferring on it an open structure. The RuvB hexamer acts as an ATP-dependent pump, pulling dsDNA into and through the RuvAB complex. HJ branch migration allows RuvC to scan DNA until it finds its consensus sequence, where it cleaves and resolves the cruciform DNA. This is Holliday junction branch migration complex subunit RuvA from Cereibacter sphaeroides (strain ATCC 17029 / ATH 2.4.9) (Rhodobacter sphaeroides).